Consider the following 145-residue polypeptide: D-aminoacyl-tRNA deacylase (145 aa).

The Gly-cisPro motif, important for rejection of L-amino acids signature appears at 137–138 (GP).

The protein belongs to the DTD family. As to quaternary structure, homodimer.

It is found in the cytoplasm. It catalyses the reaction glycyl-tRNA(Ala) + H2O = tRNA(Ala) + glycine + H(+). It carries out the reaction a D-aminoacyl-tRNA + H2O = a tRNA + a D-alpha-amino acid + H(+). Its function is as follows. An aminoacyl-tRNA editing enzyme that deacylates mischarged D-aminoacyl-tRNAs. Also deacylates mischarged glycyl-tRNA(Ala), protecting cells against glycine mischarging by AlaRS. Acts via tRNA-based rather than protein-based catalysis; rejects L-amino acids rather than detecting D-amino acids in the active site. By recycling D-aminoacyl-tRNA to D-amino acids and free tRNA molecules, this enzyme counteracts the toxicity associated with the formation of D-aminoacyl-tRNA entities in vivo and helps enforce protein L-homochirality. This chain is D-aminoacyl-tRNA deacylase, found in Rhodococcus opacus (strain B4).